The chain runs to 1167 residues: DNA-directed RNA polymerase subunit beta (1167 aa).

It belongs to the RNA polymerase beta chain family. As to quaternary structure, the RNAP catalytic core consists of 2 alpha, 1 beta, 1 beta' and 1 omega subunit. When a sigma factor is associated with the core the holoenzyme is formed, which can initiate transcription.

It catalyses the reaction RNA(n) + a ribonucleoside 5'-triphosphate = RNA(n+1) + diphosphate. DNA-dependent RNA polymerase catalyzes the transcription of DNA into RNA using the four ribonucleoside triphosphates as substrates. The chain is DNA-directed RNA polymerase subunit beta from Treponema denticola (strain ATCC 35405 / DSM 14222 / CIP 103919 / JCM 8153 / KCTC 15104).